Consider the following 252-residue polypeptide: NAD-dependent protein deacetylase (252 aa).

Residues 2-243 (DSKRDEKILE…DRVVKELKKI (242 aa)) enclose the Deacetylase sirtuin-type domain. NAD(+)-binding residues include alanine 28, threonine 32, phenylalanine 39, arginine 40, glutamine 109, isoleucine 111, aspartate 112, and histidine 127. Phenylalanine 39 provides a ligand contact to nicotinamide. Residues isoleucine 111 and aspartate 112 each contribute to the nicotinamide site. Histidine 127 serves as the catalytic Proton acceptor. Residues cysteine 135, cysteine 138, cysteine 148, and cysteine 150 each coordinate Zn(2+). The NAD(+) site is built by threonine 188, serine 189, and asparagine 211.

It belongs to the sirtuin family. Class U subfamily. It depends on Zn(2+) as a cofactor.

The protein resides in the cytoplasm. The catalysed reaction is N(6)-acetyl-L-lysyl-[protein] + NAD(+) + H2O = 2''-O-acetyl-ADP-D-ribose + nicotinamide + L-lysyl-[protein]. In terms of biological role, NAD-dependent protein deacetylase which modulates the activities of several enzymes which are inactive in their acetylated form. The protein is NAD-dependent protein deacetylase of Fusobacterium nucleatum subsp. nucleatum (strain ATCC 25586 / DSM 15643 / BCRC 10681 / CIP 101130 / JCM 8532 / KCTC 2640 / LMG 13131 / VPI 4355).